A 151-amino-acid chain; its full sequence is Ribosome maturation factor RimP (151 aa).

It belongs to the RimP family.

The protein localises to the cytoplasm. In terms of biological role, required for maturation of 30S ribosomal subunits. The sequence is that of Ribosome maturation factor RimP from Haemophilus influenzae (strain PittEE).